The following is a 463-amino-acid chain: NADH dehydrogenase [ubiquinone] iron-sulfur protein 2, mitochondrial (463 aa).

Residues 1-33 (MAALRALGGLRGVAAQVLRPGAGVRLPIQPSRG) constitute a mitochondrion transit peptide. Position 62 is an N6-acetyllysine (Lys62). Symmetric dimethylarginine is present on Arg118. The [4Fe-4S] cluster site is built by Cys326, Cys332, and Cys347.

The protein belongs to the complex I 49 kDa subunit family. As to quaternary structure, core subunit of respiratory chain NADH dehydrogenase (Complex I) which is composed of 45 different subunits. Component of the iron-sulfur (IP) fragment of the enzyme. Interacts with NDUFAF3. Interacts with NDUFAF7. Interacts with CERS2. [4Fe-4S] cluster is required as a cofactor. Post-translationally, dimethylation at Arg-118 by NDUFAF7 takes place after NDUFS2 assembles into the complex I, leading to stabilize the early intermediate complex.

It is found in the mitochondrion inner membrane. It carries out the reaction a ubiquinone + NADH + 5 H(+)(in) = a ubiquinol + NAD(+) + 4 H(+)(out). Functionally, core subunit of the mitochondrial membrane respiratory chain NADH dehydrogenase (Complex I) which catalyzes electron transfer from NADH through the respiratory chain, using ubiquinone as an electron acceptor. Essential for the catalytic activity and assembly of complex I. Redox-sensitive, critical component of the oxygen-sensing pathway in the pulmonary vasculature which plays a key role in acute pulmonary oxygen-sensing and hypoxic pulmonary vasoconstriction. Plays an important role in carotid body sensing of hypoxia. Essential for glia-like neural stem and progenitor cell proliferation, differentiation and subsequent oligodendrocyte or neuronal maturation. In Pongo pygmaeus (Bornean orangutan), this protein is NADH dehydrogenase [ubiquinone] iron-sulfur protein 2, mitochondrial (NDUFS2).